Consider the following 445-residue polypeptide: Response regulator protein PilR (445 aa).

Residues 5–119 (KALIVDDEPD…RLRELVATAL (115 aa)) form the Response regulatory domain. A 4-aspartylphosphate mark is found at Asp-11 and Asp-54. A Sigma-54 factor interaction domain is found at 135–364 (LLGESPPMRA…LENMLERAYT (230 aa)). ATP contacts are provided by residues 163-170 (GESGSGKE) and 226-235 (ASGGTLFLDE). Residues 418-437 (RWNRTAAAQRLGLTFRSMRY) constitute a DNA-binding region (H-T-H motif).

Post-translationally, phosphorylated by PilS.

It localises to the cytoplasm. In terms of biological role, member of the two-component regulatory system PilS/PilR that regulates the expression of multiple genes including the type IV pilus (T4P) major subunit PilA. Thereby, plays a major role in the regulation of multiple motility pathways. Upon appropriate environmental signals, the histidine kinase PilS transfers the phosphoryl group onto PilR. In turn, PilR functions as a transcriptional activator by direct binding to a cis-acting sequence upstream of the pilin gene promoter leading to its activation. This Pseudomonas aeruginosa (strain ATCC 15692 / DSM 22644 / CIP 104116 / JCM 14847 / LMG 12228 / 1C / PRS 101 / PAO1) protein is Response regulator protein PilR (pilR).